The primary structure comprises 195 residues: Imidazoleglycerol-phosphate dehydratase (195 aa).

This sequence belongs to the imidazoleglycerol-phosphate dehydratase family.

It localises to the cytoplasm. The catalysed reaction is D-erythro-1-(imidazol-4-yl)glycerol 3-phosphate = 3-(imidazol-4-yl)-2-oxopropyl phosphate + H2O. The protein operates within amino-acid biosynthesis; L-histidine biosynthesis; L-histidine from 5-phospho-alpha-D-ribose 1-diphosphate: step 6/9. The chain is Imidazoleglycerol-phosphate dehydratase from Thermotoga petrophila (strain ATCC BAA-488 / DSM 13995 / JCM 10881 / RKU-1).